A 161-amino-acid polypeptide reads, in one-letter code: MPSFDIVSKTDFAEIDNALQNVTREISQRYDFKGAHCTVERKDQELTINADDDLKLKQMHELLQGHLARRNVEAGVLDYKEPEKAAGQSVRQKVAIRDGLDKELAKRIVKDIKGSGLKVQVAIQGDELRVSGKKRDDLQAVIQFVKGLKIEQPLQYENFRD.

It belongs to the YajQ family.

Functionally, nucleotide-binding protein. This chain is Nucleotide-binding protein Plav_2177, found in Parvibaculum lavamentivorans (strain DS-1 / DSM 13023 / NCIMB 13966).